Consider the following 1203-residue polypeptide: DNA-directed RNA polymerase I subunit RPA135 (1203 aa).

Serine 2 is modified (N-acetylserine). Serine 81 bears the Phosphoserine mark. Residues 1104–1131 form a C4-type zinc finger; sequence CRECGSILTTQQSVPRIGSISTVCCRRC. Position 1156 is a phosphoserine (serine 1156).

It belongs to the RNA polymerase beta chain family. As to quaternary structure, component of the RNA polymerase I (Pol I) complex consisting of 14 subunits: RPA135, RPA190, RPC40, RPA14, RPB5, RPO26, RPA43, RPB8, RPA12, RPB10, RPC19, RPC10, RPA49 and RPA34. The complex is composed of a horseshoe-shaped core containing ten subunits (RPA135, RPA190, RPB5, RPO26, RPB8, RPB10, RPC10, RPA12, RPC19 and RPC40) where RPA135 and RPA190 form the DNA-binding cleft. Outside of the core, RPA14 and RPA43 form the stalk that mediates interactions with transcription initiation factors and newly synthesized RNA.

It localises to the nucleus. Its subcellular location is the nucleolus. It catalyses the reaction RNA(n) + a ribonucleoside 5'-triphosphate = RNA(n+1) + diphosphate. Functionally, DNA-dependent RNA polymerases catalyze the transcription of DNA into RNA using the four ribonucleoside triphosphates as substrates. Component of RNA polymerase I (Pol I) which synthesizes ribosomal RNA precursors. Besides, RNA polymerase I has intrinsic RNA cleavage activity. RPA190 and RPA135 both contribute to the polymerase catalytic activity and together form the Pol I active center. In addition, subunit RPA12 contributes a catalytic zinc ribbon that is required for RNA cleavage by Pol I. A single stranded DNA template strand of the promoter is positioned within the central active site cleft of Pol I. A bridging helix emanates from RPA190 and crosses the cleft near the catalytic site and is thought to promote translocation of Pol I by acting as a ratchet that moves the RNA-DNA hybrid through the active site by switching from straight to bent conformations at each step of nucleotide addition. This is DNA-directed RNA polymerase I subunit RPA135 (RPA135) from Saccharomyces cerevisiae (strain ATCC 204508 / S288c) (Baker's yeast).